Consider the following 409-residue polypeptide: Glycosaminoglycan xylosylkinase (409 aa).

At 1 to 6 the chain is on the cytoplasmic side; the sequence is MKLKQR. Residues 7-25 form a helical; Signal-anchor for type II membrane protein membrane-spanning segment; the sequence is VVLLAILLVIFIFTKVFLI. Over 26–409 the chain is Lumenal; sequence DNLDTSAANR…VEDRMPLSHL (384 aa). ATP is bound by residues Q107 and K123. D142 contacts Mn(2+). Residue N193 is glycosylated (N-linked (GlcNAc...) asparagine). 2 disulfides stabilise this stretch: C196–C211 and C201–C204. 222–225 provides a ligand contact to ATP; sequence TLWL. 2 cysteine pairs are disulfide-bonded: C257-C331 and C332-C389. D289 is an active-site residue. ATP contacts are provided by E294 and D309. D309 is a Mn(2+) binding site.

Belongs to the FAM20 family. It depends on Mn(2+) as a cofactor. Widely expressed. Strongly expressed in pancreas, spleen and fetal liver.

The protein localises to the golgi apparatus membrane. It carries out the reaction 3-O-(beta-D-galactosyl-(1-&gt;3)-beta-D-galactosyl-(1-&gt;4)-beta-D-xylosyl)-L-seryl-[protein] + ATP = 3-O-(beta-D-galactosyl-(1-&gt;3)-beta-D-galactosyl-(1-&gt;4)-beta-D-2-O-phosphoxylosyl)-L-seryl-[protein] + ADP + H(+). In terms of biological role, responsible for the 2-O-phosphorylation of xylose in the glycosaminoglycan-protein linkage region of proteoglycans thereby regulating the amount of mature GAG chains. Sulfated glycosaminoglycans (GAGs), including heparan sulfate and chondroitin sulfate, are synthesized on the so-called common GAG-protein linkage region (GlcUAbeta1-3Galbeta1-3Galbeta1-4Xylbeta1-O-Ser) of core proteins, which is formed by the stepwise addition of monosaccharide residues by the respective specific glycosyltransferases. Xylose 2-O-phosphorylation may influence the catalytic activity of B3GAT3 (GlcAT-I) which completes the precursor tetrasaccharide of GAG-protein linkage regions on which the repeating disaccharide region is synthesized. The protein is Glycosaminoglycan xylosylkinase of Homo sapiens (Human).